The primary structure comprises 454 residues: Probable mitochondrial saccharopine dehydrogenase-like oxidoreductase At5g39410 (454 aa).

The residue at position 1 (M1) is an N-acetylmethionine. A disordered region spans residues 215 to 234 (RRSRPRRPRPTICGPPAKGP).

It belongs to the saccharopine dehydrogenase family.

It is found in the mitochondrion membrane. The protein is Probable mitochondrial saccharopine dehydrogenase-like oxidoreductase At5g39410 of Arabidopsis thaliana (Mouse-ear cress).